The chain runs to 412 residues: uncharacterized protein (412 aa).

The next 11 helical transmembrane spans lie at 17–37, 54–74, 91–111, 112–132, 146–166, 173–193, 225–245, 257–277, 299–319, 346–366, and 375–395; these read LLLA…ELVI, VLAL…PLLV, MIFI…FFFL, GRAL…AVVG, LIVS…SFIG, WTFW…LLEM, VYIT…SFLG, TAAG…VITG, LLAC…SLFI, VMVF…ALMG, and AAVG…SVFA.

This sequence belongs to the major facilitator superfamily.

The protein localises to the cell membrane. This is an uncharacterized protein from Bacillus subtilis (strain 168).